Here is a 298-residue protein sequence, read N- to C-terminus: S-adenosyl-L-methionine-dependent methyltransferase dpfgK (298 aa).

Belongs to the methyltransferase superfamily.

The protein operates within secondary metabolite biosynthesis; terpenoid biosynthesis. S-adenosyl-L-methionine-dependent methyltransferase; part of the gene cluster that mediates the biosynthesis of diterpenoid pyrones. The first step of the pathway is the synthesis of the alpha-pyrone moiety by the polyketide synthase dpfgA via condensation of one acetyl-CoA starter unit with 3 malonyl-CoA units and 2 methylations. The alpha-pyrone is then combined with geranylgeranyl pyrophosphate (GGPP) formed by the GGPP synthase dpfgD through the action of the prenyltransferase dpfgC to yield a linear alpha-pyrone diterpenoid. Subsequent steps in the diterpenoid pyrone biosynthetic pathway involve the decalin core formation, which is initiated by the epoxidation of the C10-C11 olefin by the FAD-dependent oxidoreductase dpfgE, and is followed by a cyclization cascade catalyzed by the terpene cyclase dpfgB. The short chain dehydrogenase/reductase dpfgG then oxidizes the 8S hydroxy group to a ketone and the short chain dehydrogenase/reductase dpfgH reduces the ketone to the 8R hydroxy group to yield higginsianin B. Higginsianin B is further methylated by the methyltransferase dpfgI to produce the intermediate named FDDP B. The cytochrome P450 monooxygenase dfgpJ then catalyzes a three-step oxidation at C-27 to generate a carboxylic acid as well as C-26 hydroxylation. Finally, methyltransferase dpfgK methylates the carboxylic acid generated by dpfgJ, yielding the final diterpenoid pyrones from the pathway which were named FDDP D and FDDP E. The sequence is that of S-adenosyl-L-methionine-dependent methyltransferase dpfgK from Gibberella zeae (strain ATCC MYA-4620 / CBS 123657 / FGSC 9075 / NRRL 31084 / PH-1) (Wheat head blight fungus).